A 122-amino-acid polypeptide reads, in one-letter code: Large ribosomal subunit protein uL18 (122 aa).

Residues 1–22 (MDKNKKLQSKRLRRRRHVRNKL) are compositionally biased toward basic residues. The disordered stretch occupies residues 1–25 (MDKNKKLQSKRLRRRRHVRNKLRGS).

The protein belongs to the universal ribosomal protein uL18 family. In terms of assembly, part of the 50S ribosomal subunit; part of the 5S rRNA/L5/L18/L25 subcomplex. Contacts the 5S and 23S rRNAs.

In terms of biological role, this is one of the proteins that bind and probably mediate the attachment of the 5S RNA into the large ribosomal subunit, where it forms part of the central protuberance. The sequence is that of Large ribosomal subunit protein uL18 from Rhodopirellula baltica (strain DSM 10527 / NCIMB 13988 / SH1).